Consider the following 274-residue polypeptide: tRNA-cytidine(32) 2-sulfurtransferase (274 aa).

The PP-loop motif motif lies at 40–45 (SGGKDS). Cysteine 115, cysteine 118, and cysteine 206 together coordinate [4Fe-4S] cluster.

Belongs to the TtcA family. Homodimer. The cofactor is Mg(2+). It depends on [4Fe-4S] cluster as a cofactor.

The protein localises to the cytoplasm. It catalyses the reaction cytidine(32) in tRNA + S-sulfanyl-L-cysteinyl-[cysteine desulfurase] + AH2 + ATP = 2-thiocytidine(32) in tRNA + L-cysteinyl-[cysteine desulfurase] + A + AMP + diphosphate + H(+). It participates in tRNA modification. Functionally, catalyzes the ATP-dependent 2-thiolation of cytidine in position 32 of tRNA, to form 2-thiocytidine (s(2)C32). The sulfur atoms are provided by the cysteine/cysteine desulfurase (IscS) system. The protein is tRNA-cytidine(32) 2-sulfurtransferase of Pseudomonas fluorescens (strain ATCC BAA-477 / NRRL B-23932 / Pf-5).